Reading from the N-terminus, the 619-residue chain is Chaperone protein HscA homolog (619 aa).

It belongs to the heat shock protein 70 family.

Its function is as follows. Chaperone involved in the maturation of iron-sulfur cluster-containing proteins. Has a low intrinsic ATPase activity which is markedly stimulated by HscB. The chain is Chaperone protein HscA homolog from Pseudomonas aeruginosa (strain UCBPP-PA14).